Consider the following 274-residue polypeptide: Protein YehF (274 aa).

The 77-residue stretch at 2–78 (RHFIYQDEKS…KDNSLQPSQT (77 aa)) folds into the WGR domain.

Has been implicated in selenate reduction; a mini-Tn10 insertion mutant in 'molR', (which was mapped to 47.3 centisomes i.e. this locus), is defective in the reduction of selenate. The sequence is that of Protein YehF (yehF) from Escherichia coli (strain K12).